Consider the following 83-residue polypeptide: Exodeoxyribonuclease 7 small subunit (83 aa).

This sequence belongs to the XseB family. Heterooligomer composed of large and small subunits.

The protein localises to the cytoplasm. The enzyme catalyses Exonucleolytic cleavage in either 5'- to 3'- or 3'- to 5'-direction to yield nucleoside 5'-phosphates.. In terms of biological role, bidirectionally degrades single-stranded DNA into large acid-insoluble oligonucleotides, which are then degraded further into small acid-soluble oligonucleotides. This chain is Exodeoxyribonuclease 7 small subunit, found in Rhizobium leguminosarum bv. trifolii (strain WSM2304).